The primary structure comprises 225 residues: 2-C-methyl-D-erythritol 4-phosphate cytidylyltransferase (225 aa).

The protein belongs to the IspD/TarI cytidylyltransferase family. IspD subfamily.

It catalyses the reaction 2-C-methyl-D-erythritol 4-phosphate + CTP + H(+) = 4-CDP-2-C-methyl-D-erythritol + diphosphate. It functions in the pathway isoprenoid biosynthesis; isopentenyl diphosphate biosynthesis via DXP pathway; isopentenyl diphosphate from 1-deoxy-D-xylulose 5-phosphate: step 2/6. Functionally, catalyzes the formation of 4-diphosphocytidyl-2-C-methyl-D-erythritol from CTP and 2-C-methyl-D-erythritol 4-phosphate (MEP). The chain is 2-C-methyl-D-erythritol 4-phosphate cytidylyltransferase from Prochlorococcus marinus (strain NATL2A).